The sequence spans 317 residues: Ribosomal protein L11 methyltransferase (317 aa).

S-adenosyl-L-methionine contacts are provided by T158, G179, D201, and N244.

This sequence belongs to the methyltransferase superfamily. PrmA family.

Its subcellular location is the cytoplasm. It carries out the reaction L-lysyl-[protein] + 3 S-adenosyl-L-methionine = N(6),N(6),N(6)-trimethyl-L-lysyl-[protein] + 3 S-adenosyl-L-homocysteine + 3 H(+). Methylates ribosomal protein L11. The protein is Ribosomal protein L11 methyltransferase of Streptococcus pyogenes serotype M1.